Here is a 246-residue protein sequence, read N- to C-terminus: E3 ubiquitin-protein ligase MARCHF2 (246 aa).

An RING-CH-type zinc finger spans residues 56 to 116; sequence DSQSDCPFCR…ELCHTEFAVE (61 aa). Residues C64, C67, C80, C82, H90, C93, C106, and C109 each contribute to the Zn(2+) site. Residues 121 to 246 form a required for interaction with IKBKG region; the sequence is PLTEWLKDPG…LKKVAEETPV (126 aa). 2 helical membrane-spanning segments follow: residues 138–158 and 175–195; these read LCCD…SGWL and AVGL…WTLV.

As to quaternary structure, interacts with STX6; the interaction promotes MARCHF2-mediated ubiquitination and degradation of CFTR. Interacts with MARCHF3. Interacts with GOPC/CAL; the interaction leads to CFTR ubiquitination and degradation. Interacts with CFTR; the interaction leads to CFTR ubiqtuitination and degradation. Interacts (via PDZ domain) with DLG1 (via PDZ domains); the interaction leads to DLG1 ubiqtuitination and degradation. Interacts with ERGIC3. Interacts with ADRB2. Interacts with IKBKG/NEMO; during the late stages of macrophage viral and bacterial infection; the interaction leads to ubiquitination and degradation of IKBKG/NEMO.

It is found in the endoplasmic reticulum membrane. The protein resides in the lysosome membrane. It localises to the endosome membrane. The protein localises to the golgi apparatus membrane. Its subcellular location is the cytoplasm. It is found in the cell membrane. The catalysed reaction is S-ubiquitinyl-[E2 ubiquitin-conjugating enzyme]-L-cysteine + [acceptor protein]-L-lysine = [E2 ubiquitin-conjugating enzyme]-L-cysteine + N(6)-ubiquitinyl-[acceptor protein]-L-lysine.. Its pathway is protein modification; protein ubiquitination. Functionally, E3 ubiquitin-protein ligase that may mediate ubiquitination of TFRC and CD86, and promote their subsequent endocytosis and sorting to lysosomes via multivesicular bodies. E3 ubiquitin ligases accept ubiquitin from an E2 ubiquitin-conjugating enzyme in the form of a thioester and then directly transfer the ubiquitin to targeted substrates. Together with GOPC/CAL mediates the ubiquitination and lysosomal degradation of CFTR. Ubiquitinates and therefore mediates the degradation of DLG1. Regulates the intracellular trafficking and secretion of alpha1-antitrypsin/SERPINA1 and HP/haptoglobin via ubiquitination and degradation of the cargo receptor ERGIC3. Negatively regulates the antiviral and antibacterial immune response by repression of the NF-kB and type 1 IFN signaling pathways, via MARCHF2-mediated K48-linked polyubiquitination of IKBKG/NEMO, resulting in its proteasomal degradation. May be involved in endosomal trafficking through interaction with STX6. This chain is E3 ubiquitin-protein ligase MARCHF2 (Marchf2), found in Mus musculus (Mouse).